A 491-amino-acid polypeptide reads, in one-letter code: UDP-glycosyltransferase 73C1 (491 aa).

UDP-alpha-D-glucose contacts are provided by residues S292, 352–354, 369–377, and 391–394; these read SPQ, HCGWNSTLE, and FGDQ.

Belongs to the UDP-glycosyltransferase family.

Functionally, involved in the O-glucosylation of trans-zeatin and dihydrozeatin. Also active in vitro on cis-zeatin, dihydrozeatin-9-N-Glc, and olomoucine. Can detoxify the explosive 2,4,6-trinitrotoluene in plant by forming O- or C-glucose conjugates. This chain is UDP-glycosyltransferase 73C1 (UGT73C1), found in Arabidopsis thaliana (Mouse-ear cress).